We begin with the raw amino-acid sequence, 156 residues long: Small ribosomal subunit protein uS7 (156 aa).

This sequence belongs to the universal ribosomal protein uS7 family. In terms of assembly, part of the 30S ribosomal subunit. Contacts proteins S9 and S11.

Its function is as follows. One of the primary rRNA binding proteins, it binds directly to 16S rRNA where it nucleates assembly of the head domain of the 30S subunit. Is located at the subunit interface close to the decoding center, probably blocks exit of the E-site tRNA. The protein is Small ribosomal subunit protein uS7 of Ruegeria pomeroyi (strain ATCC 700808 / DSM 15171 / DSS-3) (Silicibacter pomeroyi).